Here is a 194-residue protein sequence, read N- to C-terminus: dITP/XTP pyrophosphatase (194 aa).

11 to 16 (SHNAGK) contributes to the substrate binding site. Catalysis depends on D70, which acts as the Proton acceptor. A Mg(2+)-binding site is contributed by D70. Substrate is bound by residues S71, 149–152 (FGYD), K172, and 177–178 (HR).

The protein belongs to the HAM1 NTPase family. Homodimer. Requires Mg(2+) as cofactor.

The enzyme catalyses XTP + H2O = XMP + diphosphate + H(+). It catalyses the reaction dITP + H2O = dIMP + diphosphate + H(+). The catalysed reaction is ITP + H2O = IMP + diphosphate + H(+). In terms of biological role, pyrophosphatase that catalyzes the hydrolysis of nucleoside triphosphates to their monophosphate derivatives, with a high preference for the non-canonical purine nucleotides XTP (xanthosine triphosphate), dITP (deoxyinosine triphosphate) and ITP. Seems to function as a house-cleaning enzyme that removes non-canonical purine nucleotides from the nucleotide pool, thus preventing their incorporation into DNA/RNA and avoiding chromosomal lesions. The chain is dITP/XTP pyrophosphatase from Thermosynechococcus vestitus (strain NIES-2133 / IAM M-273 / BP-1).